The primary structure comprises 560 residues: Putative transport protein VIBHAR_02636 (560 aa).

A run of 5 helical transmembrane segments spans residues Leu8–Gly28, Leu37–Phe57, Phe66–Phe86, His91–Ser111, and Val164–Leu184. RCK C-terminal domains follow at residues Leu205–Gly292 and Lys293–Phe376. 6 consecutive transmembrane segments (helical) span residues Leu386–Phe406, Val409–Leu429, Leu450–His470, Ile478–Ala498, Ser505–Val525, and Ala539–Leu559.

Belongs to the AAE transporter (TC 2.A.81) family. YbjL subfamily.

The protein localises to the cell membrane. The sequence is that of Putative transport protein VIBHAR_02636 from Vibrio campbellii (strain ATCC BAA-1116).